A 498-amino-acid polypeptide reads, in one-letter code: Probable malate:quinone oxidoreductase 2 (498 aa).

The protein belongs to the MQO family. FAD is required as a cofactor.

The catalysed reaction is (S)-malate + a quinone = a quinol + oxaloacetate. It participates in carbohydrate metabolism; tricarboxylic acid cycle; oxaloacetate from (S)-malate (quinone route): step 1/1. The polypeptide is Probable malate:quinone oxidoreductase 2 (Staphylococcus epidermidis (strain ATCC 12228 / FDA PCI 1200)).